A 188-amino-acid chain; its full sequence is ATP synthase subunit delta (188 aa).

This sequence belongs to the ATPase delta chain family. In terms of assembly, F-type ATPases have 2 components, F(1) - the catalytic core - and F(0) - the membrane proton channel. F(1) has five subunits: alpha(3), beta(3), gamma(1), delta(1), epsilon(1). F(0) has three main subunits: a(1), b(2) and c(10-14). The alpha and beta chains form an alternating ring which encloses part of the gamma chain. F(1) is attached to F(0) by a central stalk formed by the gamma and epsilon chains, while a peripheral stalk is formed by the delta and b chains.

It localises to the cell inner membrane. In terms of biological role, f(1)F(0) ATP synthase produces ATP from ADP in the presence of a proton or sodium gradient. F-type ATPases consist of two structural domains, F(1) containing the extramembraneous catalytic core and F(0) containing the membrane proton channel, linked together by a central stalk and a peripheral stalk. During catalysis, ATP synthesis in the catalytic domain of F(1) is coupled via a rotary mechanism of the central stalk subunits to proton translocation. Functionally, this protein is part of the stalk that links CF(0) to CF(1). It either transmits conformational changes from CF(0) to CF(1) or is implicated in proton conduction. In Agrobacterium fabrum (strain C58 / ATCC 33970) (Agrobacterium tumefaciens (strain C58)), this protein is ATP synthase subunit delta.